Reading from the N-terminus, the 254-residue chain is MTQLVELKEVCLSFDGRSVLDKVSFTLNKGKITTLVGPNGAGKSTLSKLVLGLLTPDSGQITRSRDLRVGYVPQRLYLDPTLPLTVRRFLQLGKNGRLSIEEALNRVGAEDLLDNRMQKLSGGEMQRVLLARALLVKPELLVLDEPVQGVDINGQIELYALISQLAAEFNCAVLMVSHDLHLVMASTHEVICLNRHVCCHGEPESVARHPEFARLFGRPEQEVLAVYTHHHHCDGEHHHHEPQVPVIRLPSRNQ.

An ABC transporter domain is found at 5–219 (VELKEVCLSF…PEFARLFGRP (215 aa)). Position 37-44 (37-44 (GPNGAGKS)) interacts with ATP. A compositionally biased stretch (basic and acidic residues) spans 233–242 (CDGEHHHHEP). The disordered stretch occupies residues 233–254 (CDGEHHHHEPQVPVIRLPSRNQ).

It belongs to the ABC transporter superfamily. Zinc importer (TC 3.A.1.15.5) family. The complex is composed of two ATP-binding proteins (ZnuC), two transmembrane proteins (ZnuB) and a solute-binding protein (ZnuA).

It localises to the cell inner membrane. It catalyses the reaction Zn(2+)(out) + ATP(in) + H2O(in) = Zn(2+)(in) + ADP(in) + phosphate(in) + H(+)(in). Functionally, part of the ABC transporter complex ZnuABC involved in zinc import. Responsible for energy coupling to the transport system. This chain is Zinc import ATP-binding protein ZnuC, found in Aeromonas hydrophila subsp. hydrophila (strain ATCC 7966 / DSM 30187 / BCRC 13018 / CCUG 14551 / JCM 1027 / KCTC 2358 / NCIMB 9240 / NCTC 8049).